Consider the following 356-residue polypeptide: Tyrosinase P (356 aa).

The signal sequence occupies residues 1–19; sequence MGFYRNLVLVAASCTQALG. Asparagine 81 carries N-linked (GlcNAc...) asparagine glycosylation. Cu cation is bound by residues histidine 87 and histidine 96. Residues asparagine 148 and asparagine 193 are each glycosylated (N-linked (GlcNAc...) asparagine). Histidine 203 is a Cu cation binding site. An N-linked (GlcNAc...) asparagine glycan is attached at asparagine 226. Residues histidine 263 and histidine 286 each coordinate Cu cation. A glycan (N-linked (GlcNAc...) asparagine) is linked at asparagine 309.

The protein belongs to the tyrosinase family. Cu(2+) serves as cofactor. Post-translationally, glycosylated.

It localises to the endoplasmic reticulum lumen. The protein localises to the golgi apparatus lumen. The catalysed reaction is aspulvinone E + O2 = (5Z)-3-(3,4-dihydroxyphenyl)-5-[(3,4-dihydroxyphenyl)methylidene]-5-oxo-2,5-dihydrofuran-3-olate. The enzyme catalyses aspulvinone E + O2 = (2Z)-2-[(3,4-dioxocyclohexa-1,5-dien-1-yl)methylidene]-4-(4-hydroxyphenyl)-5-oxo-2,5-dihydrofuran-3-olate + H2O. Its activity is regulated as follows. Activity is inhibited by the presence of dithiothreitol (DTT). Its function is as follows. Tyrosinase; part of the gene cluster that mediates the biosynthesis of Asp-melanin, a pigment that confers resistance against UV light and hampers phagocytosis by soil amoeba. The nonribosomal peptide synthase melA converts 4-hydroxyphenylpyruvate (4-HPPA) to aspulvinone E. The tyrosinase tyrP then performs hydroxylations of both aromatic moieties of aspulvinone E. The product of tyrP is highly unstable, and, due to the high reactivity of methides and ortho-diquinones, the polymeric Asp-melanin forms spontaneously. The sequence is that of Tyrosinase P (tyrP) from Aspergillus terreus.